The primary structure comprises 377 residues: tRNA-specific 2-thiouridylase MnmA (377 aa).

ATP-binding positions include G18–S25 and M44. Residues N104 to D106 are interaction with target base in tRNA. Residue C109 is the Nucleophile of the active site. An intrachain disulfide couples C109 to C209. ATP is bound at residue G134. An interaction with tRNA region spans residues K159–Q161. C209 (cysteine persulfide intermediate) is an active-site residue. Residues R324–Y325 form an interaction with tRNA region.

It belongs to the MnmA/TRMU family.

It is found in the cytoplasm. The catalysed reaction is S-sulfanyl-L-cysteinyl-[protein] + uridine(34) in tRNA + AH2 + ATP = 2-thiouridine(34) in tRNA + L-cysteinyl-[protein] + A + AMP + diphosphate + H(+). Functionally, catalyzes the 2-thiolation of uridine at the wobble position (U34) of tRNA, leading to the formation of s(2)U34. The polypeptide is tRNA-specific 2-thiouridylase MnmA (Photobacterium profundum (strain SS9)).